The following is a 348-amino-acid chain: uncharacterized protein (348 aa).

A disordered region spans residues serine 132–leucine 348. Residues serine 161–arginine 178 are compositionally biased toward low complexity. Positions serine 192 to proline 207 are enriched in polar residues. A compositionally biased stretch (low complexity) spans alanine 227–proline 273. A compositionally biased stretch (pro residues) spans alanine 274–arginine 287. Residues threonine 288–arginine 310 show a composition bias toward low complexity.

This is an uncharacterized protein from Streptomyces fradiae (Streptomyces roseoflavus).